The primary structure comprises 470 residues: MKVKTRFAPSPTGFLHVGGARTALYSWLHAKSKGGEFVLRIEDTDIARSTQEAVDAILEGMTWMGLTWDEGPYYQTKRFDRYKEIIAKMLSDGTAYKCYCTKERVNELREAQEKAGESPRYDSKCRGLAPQNTDAPYVIRFKNPKEGSVKFDDHVRGPIEFSNTELDDLIIQRTDGTPTYNFCVVVDDWDMGITYVVRGEDHINNTPRQINILKALGAPLPEYAHVAMILGDDGAKLSKRHGAVSVMQFRDEGYLPEALKNYLVRLGWSHGDQEIFSEKEMIELFSLDAINKAPSAFNTEKLLWLNQHYIKSLDPAYIAQHLAWHMTNQKIDMTNGPALPEIVSALSERAKTLVELATTSRYFFEEYEDFDATAAKKHLRPVAEDALVLVKQKLQTSDDWTDPALHQIINDTANELGVGMGKVGMPLRVAITGGGQSPSLDVTLRLIGKERSIKRIDRALEFIAARVAAS.

Residues proline 9–glycine 19 carry the 'HIGH' region motif. Residues lysine 236–arginine 240 carry the 'KMSKS' region motif. Lysine 239 provides a ligand contact to ATP.

This sequence belongs to the class-I aminoacyl-tRNA synthetase family. Glutamate--tRNA ligase type 1 subfamily. Monomer.

Its subcellular location is the cytoplasm. The enzyme catalyses tRNA(Glu) + L-glutamate + ATP = L-glutamyl-tRNA(Glu) + AMP + diphosphate. In terms of biological role, catalyzes the attachment of glutamate to tRNA(Glu) in a two-step reaction: glutamate is first activated by ATP to form Glu-AMP and then transferred to the acceptor end of tRNA(Glu). The sequence is that of Glutamate--tRNA ligase from Psychromonas ingrahamii (strain DSM 17664 / CCUG 51855 / 37).